We begin with the raw amino-acid sequence, 95 residues long: Protein TusB (95 aa).

This sequence belongs to the DsrH/TusB family. As to quaternary structure, heterohexamer, formed by a dimer of trimers. The hexameric TusBCD complex contains 2 copies each of TusB, TusC and TusD. The TusBCD complex interacts with TusE.

The protein localises to the cytoplasm. Part of a sulfur-relay system required for 2-thiolation of 5-methylaminomethyl-2-thiouridine (mnm(5)s(2)U) at tRNA wobble positions. The sequence is that of Protein TusB from Pectobacterium parmentieri.